The chain runs to 157 residues: Probable Brix domain-containing ribosomal biogenesis protein (157 aa).

Residues 1-157 (MLVTSSRKPS…KLNLRGFKKY (157 aa)) form the Brix domain.

In terms of biological role, probably involved in the biogenesis of the ribosome. This Methanosarcina barkeri (strain Fusaro / DSM 804) protein is Probable Brix domain-containing ribosomal biogenesis protein.